A 456-amino-acid polypeptide reads, in one-letter code: Serine--tRNA ligase (456 aa).

Disordered stretches follow at residues 107-130 (PHSS…GTPP) and 229-253 (FLEN…QDDD). The span at 114–125 (GRSESDNREVRR) shows a compositional bias: basic and acidic residues. Over residues 239–248 (LPSNSNSPQG) the composition is skewed to polar residues. 260–262 (TSE) is an L-serine binding site. 291-293 (RSE) provides a ligand contact to ATP. Glutamate 314 serves as a coordination point for L-serine. ATP is bound at residue 378–381 (EISS). L-serine is bound at residue serine 413.

The protein belongs to the class-II aminoacyl-tRNA synthetase family. Type-1 seryl-tRNA synthetase subfamily. As to quaternary structure, homodimer. The tRNA molecule binds across the dimer.

Its subcellular location is the cytoplasm. The catalysed reaction is tRNA(Ser) + L-serine + ATP = L-seryl-tRNA(Ser) + AMP + diphosphate + H(+). It catalyses the reaction tRNA(Sec) + L-serine + ATP = L-seryl-tRNA(Sec) + AMP + diphosphate + H(+). It functions in the pathway aminoacyl-tRNA biosynthesis; selenocysteinyl-tRNA(Sec) biosynthesis; L-seryl-tRNA(Sec) from L-serine and tRNA(Sec): step 1/1. In terms of biological role, catalyzes the attachment of serine to tRNA(Ser). Is also able to aminoacylate tRNA(Sec) with serine, to form the misacylated tRNA L-seryl-tRNA(Sec), which will be further converted into selenocysteinyl-tRNA(Sec). The protein is Serine--tRNA ligase of Nitrosospira multiformis (strain ATCC 25196 / NCIMB 11849 / C 71).